Reading from the N-terminus, the 476-residue chain is GTPase Der (476 aa).

EngA-type G domains follow at residues 3–167 (FTVA…GEER) and 205–380 (LRVA…KVWN). Residues 9 to 16 (GRPNVGKS), 56 to 60 (DTAGL), 119 to 122 (NKSE), 211 to 218 (GRPNAGKS), 258 to 262 (DTAGM), and 323 to 326 (NKWD) contribute to the GTP site. In terms of domain architecture, KH-like spans 381–465 (RRISTARLNR…PIRVHFRASE (85 aa)).

The protein belongs to the TRAFAC class TrmE-Era-EngA-EngB-Septin-like GTPase superfamily. EngA (Der) GTPase family. As to quaternary structure, associates with the 50S ribosomal subunit.

Functionally, GTPase that plays an essential role in the late steps of ribosome biogenesis. In Rhizobium meliloti (strain 1021) (Ensifer meliloti), this protein is GTPase Der.